The sequence spans 181 residues: Resolvase/recombinase (181 aa).

Positions 2 to 137 constitute a Resolvase/invertase-type recombinase catalytic domain; it reads RLFGYARVST…EGRLEAKAKG (136 aa). The O-(5'-phospho-DNA)-serine intermediate role is filled by S10. The segment at residues 161–180 is a DNA-binding region (H-T-H motif); that stretch reads AMEIAKRLKIGRSTVYKVLA.

This sequence belongs to the site-specific recombinase resolvase family.

In terms of biological role, site-specific recombination protein. This is Resolvase/recombinase from Pseudomonas putida (Arthrobacter siderocapsulatus).